The following is an 841-amino-acid chain: Beta-adaptin-like protein A (841 aa).

2 disordered regions span residues 1-25 (MAPP…VSDL) and 650-671 (DENK…LESS). Polar residues-rich tracts occupy residues 9-25 (RYPS…VSDL) and 654-671 (GVSN…LESS).

The protein belongs to the adaptor complexes large subunit family. Adaptor protein complexes are heterotetramers composed of two large adaptins (beta-type subunit and alpha-type or delta-type or epsilon-type or gamma-type subunit), a medium adaptin (mu-type subunit) and a small adaptin (sigma-type subunit). Interacts with AHK2.

Its subcellular location is the golgi apparatus. It localises to the trans-Golgi network. The protein localises to the cytoplasmic vesicle. The protein resides in the clathrin-coated vesicle membrane. Functionally, subunit of clathrin-associated adaptor protein complex that plays a role in protein sorting in the late-Golgi/trans-Golgi network (TGN) and/or endosomes. The AP complexes mediate both the recruitment of clathrin to membranes and the recognition of sorting signals within the cytosolic tails of transmembrane cargo molecules. This chain is Beta-adaptin-like protein A (BETAA-AD), found in Arabidopsis thaliana (Mouse-ear cress).